The sequence spans 173 residues: ATP synthase subunit b (173 aa).

A helical transmembrane segment spans residues 25–45; sequence LINLVIVIGVLYWFLKGFLGG.

It belongs to the ATPase B chain family. In terms of assembly, F-type ATPases have 2 components, F(1) - the catalytic core - and F(0) - the membrane proton channel. F(1) has five subunits: alpha(3), beta(3), gamma(1), delta(1), epsilon(1). F(0) has four main subunits: a(1), b(1), b'(1) and c(10-14). The alpha and beta chains form an alternating ring which encloses part of the gamma chain. F(1) is attached to F(0) by a central stalk formed by the gamma and epsilon chains, while a peripheral stalk is formed by the delta, b and b' chains.

The protein resides in the cellular thylakoid membrane. F(1)F(0) ATP synthase produces ATP from ADP in the presence of a proton or sodium gradient. F-type ATPases consist of two structural domains, F(1) containing the extramembraneous catalytic core and F(0) containing the membrane proton channel, linked together by a central stalk and a peripheral stalk. During catalysis, ATP synthesis in the catalytic domain of F(1) is coupled via a rotary mechanism of the central stalk subunits to proton translocation. Functionally, component of the F(0) channel, it forms part of the peripheral stalk, linking F(1) to F(0). The polypeptide is ATP synthase subunit b (Synechococcus sp. (strain CC9311)).